The chain runs to 381 residues: Peptidoglycan transport system permease protein YejE (381 aa).

The next 5 helical transmembrane spans lie at Y38 to A58, V183 to I203, I230 to L250, L292 to I312, and W347 to G367. In terms of domain architecture, ABC transmembrane type-1 spans F179–R371.

It belongs to the binding-protein-dependent transport system permease family. In terms of assembly, the complex is composed of one ATP-binding protein (YejF), two transmembrane proteins (YejB and YejE) and a solute-binding protein (YepA or YejA).

It is found in the cell inner membrane. Its function is as follows. Part of the ABC transporter complex YejBEF-YepA involved in the uptake of muropeptides, the breakdown products of cell wall peptidoglycan. The import of muropeptides into the cell enables peptidoglycan recycling, which is vital for cell wall integrity in this bacterium. Is also probably part of the ABC transporter complex YejABEF, which is likely involved in broad-spectrum peptide import. Responsible for the translocation of the substrate across the membrane. This is Peptidoglycan transport system permease protein YejE from Agrobacterium fabrum (strain C58 / ATCC 33970) (Agrobacterium tumefaciens (strain C58)).